Here is a 516-residue protein sequence, read N- to C-terminus: GMP synthase [glutamine-hydrolyzing] (516 aa).

Residues 5–199 (SIIVLDFGSQ…ARNICGVTEK (195 aa)) enclose the Glutamine amidotransferase type-1 domain. Cys82 (nucleophile) is an active-site residue. Active-site residues include His173 and Glu175. Residues 200-391 (WKMEHFLKEQ…LGLPESMINR (192 aa)) enclose the GMPS ATP-PPase domain. ATP is bound at residue 227 to 233 (SGGVDSS).

Homodimer.

It catalyses the reaction XMP + L-glutamine + ATP + H2O = GMP + L-glutamate + AMP + diphosphate + 2 H(+). It functions in the pathway purine metabolism; GMP biosynthesis; GMP from XMP (L-Gln route): step 1/1. Its function is as follows. Catalyzes the synthesis of GMP from XMP. This chain is GMP synthase [glutamine-hydrolyzing], found in Sulfurimonas denitrificans (strain ATCC 33889 / DSM 1251) (Thiomicrospira denitrificans (strain ATCC 33889 / DSM 1251)).